Reading from the N-terminus, the 897-residue chain is MAEVSVKQLATDIDTPVDRLLQQFVDAGISKSKADDMVSESEKQTLLAHLKKQHGGDEVAAPARMTLQRKTKSTISVQGTGGKNKEVQVEVRKSRTYVRRSALEDEQRQAEAEETARLEAEEKARREAEEKARLDAEEKARREAEQARREAEEKARIEAQQKARQAQQPAKAAGSTAQQEAEKMAKREAEELKRQQEQAALTKAEELAAKKAEEARVMAEQNAARWAEEEAARAKESSDYHLTTNKHAQAAEDELDRKEETSRRTAAAAKGPKKAGRREDDRDARNPRARKGKRGKVATPNAMKHGFNKPAAAVNRDVVIGETITVAELANKMAVKGVEVIKVMMKMGAMATINQVIDQETAQLVAEEMGHKVVLRRENELEEAVLSDRDETSEAKPRAPVVTIMGHVDHGKTSLLDYIRKAKVAAGEAGGITQHIGAYHVETDSGMITFLDTPGHAAFTSMRARGAKATDIVVLVVAADDGVMPQTIEAIQHAKAAEVPLVVAVNKIDKPEADPDRVKTELARYNVMSEDWGGDCQFVHVSAKSGQGIDDLLEAILIQSEVLELKAVVDGMANGVVIESFLDKGRGPVATVLVQEGTLRQGDIVLCGLEYGRVRAMRDELGREIKEAGPSLPVEILGLSGVPSAGDEATVVRDEKKAREVALYRQGKFREVKLARQQKAKLENMFANMTEGEVSEVNVVIKADVQGSVEAICDALVKLSTDEVKVKIVGSGVGGITETDATLAAASSAILVGFNVRADASARKVIEAESLDLRYYSVIYDLIDEVKQAMSGMLAPEYRQEIIGLAEVRSVFKSPKFGAVAGCMVTEGVVKRSNRIRVLRDNVVIYEGELESLRRFKDDVNEVKNGYECGIAVKNYNDVREGDQIEVYETVEIQRTL.

Disordered regions lie at residues 69 to 88 (RKTKSTISVQGTGGKNKEVQ) and 95 to 304 (RTYV…NAMK). Residues 101–161 (SALEDEQRQA…EEKARIEAQQ (61 aa)) are compositionally biased toward basic and acidic residues. Low complexity predominate over residues 162-179 (KARQAQQPAKAAGSTAQQ). Composition is skewed to basic and acidic residues over residues 180-196 (EAEKMAKREAEELKRQQ), 203-217 (KAEELAAKKAEEARV), 226-239 (WAEEEAARAKESSD), and 277-286 (RREDDRDARN). The span at 287 to 296 (PRARKGKRGK) shows a compositional bias: basic residues. The tr-type G domain maps to 397 to 566 (PRAPVVTIMG…LIQSEVLELK (170 aa)). Residues 406–413 (GHVDHGKT) are G1. 406-413 (GHVDHGKT) provides a ligand contact to GTP. The segment at 431–435 (GITQH) is G2. A G3 region spans residues 452 to 455 (DTPG). Residues 452 to 456 (DTPGH) and 506 to 509 (NKID) contribute to the GTP site. The tract at residues 506 to 509 (NKID) is G4. Residues 542 to 544 (SAK) form a G5 region.

It belongs to the TRAFAC class translation factor GTPase superfamily. Classic translation factor GTPase family. IF-2 subfamily.

The protein localises to the cytoplasm. One of the essential components for the initiation of protein synthesis. Protects formylmethionyl-tRNA from spontaneous hydrolysis and promotes its binding to the 30S ribosomal subunits. Also involved in the hydrolysis of GTP during the formation of the 70S ribosomal complex. In Aeromonas hydrophila subsp. hydrophila (strain ATCC 7966 / DSM 30187 / BCRC 13018 / CCUG 14551 / JCM 1027 / KCTC 2358 / NCIMB 9240 / NCTC 8049), this protein is Translation initiation factor IF-2.